Reading from the N-terminus, the 649-residue chain is Glucan endo-1,3-beta-glucosidase btgC (649 aa).

Disordered regions lie at residues 1–50 (MGDR…AHTH) and 110–224 (YHTT…AGGA). Over 1 to 274 (MGDRSEQYGD…PRPSGASRKR (274 aa)) the chain is Cytoplasmic. A compositionally biased stretch (low complexity) spans 144–157 (GSSAALSAAGAPAG). A compositionally biased stretch (acidic residues) spans 198–208 (NPDDILDDGDD). The helical; Signal-anchor for type II membrane protein transmembrane segment at 275–295 (GWIIGGILAFIVIGAIVGGAV) threads the bilayer. The Extracellular segment spans residues 296–649 (GGTLGNRRSE…IPDCGGKTAA (354 aa)). Residues 301–329 (NRRSETASESSEVSADDDTETNGDLDKNS) are disordered. The segment covering 314-323 (SADDDTETNG) has biased composition (acidic residues). N-linked (GlcNAc...) asparagine glycosylation is found at Asn-369, Asn-392, and Asn-420. Residue Glu-452 is the Proton donor of the active site. Glu-551 serves as the catalytic Nucleophile. The N-linked (GlcNAc...) asparagine glycan is linked to Asn-596.

This sequence belongs to the glycosyl hydrolase 17 family.

The protein localises to the cell membrane. The enzyme catalyses Hydrolysis of (1-&gt;3)-beta-D-glucosidic linkages in (1-&gt;3)-beta-D-glucans.. Its function is as follows. Glucanases play a role in cell expansion during growth, in cell-cell fusion during mating, and in spore release during sporulation. This enzyme may be involved in beta-glucan degradation. Active on laminarin and lichenan. This chain is Glucan endo-1,3-beta-glucosidase btgC (btgC), found in Emericella nidulans (strain FGSC A4 / ATCC 38163 / CBS 112.46 / NRRL 194 / M139) (Aspergillus nidulans).